The following is a 423-amino-acid chain: UDP-N-acetylglucosamine 1-carboxyvinyltransferase (423 aa).

22–23 (KN) lines the phosphoenolpyruvate pocket. R93 contributes to the UDP-N-acetyl-alpha-D-glucosamine binding site. The active-site Proton donor is C117. Position 117 is a 2-(S-cysteinyl)pyruvic acid O-phosphothioketal (C117). Residues 122–126 (RPVDL), D308, and V330 contribute to the UDP-N-acetyl-alpha-D-glucosamine site.

It belongs to the EPSP synthase family. MurA subfamily.

It localises to the cytoplasm. It catalyses the reaction phosphoenolpyruvate + UDP-N-acetyl-alpha-D-glucosamine = UDP-N-acetyl-3-O-(1-carboxyvinyl)-alpha-D-glucosamine + phosphate. The protein operates within cell wall biogenesis; peptidoglycan biosynthesis. Its function is as follows. Cell wall formation. Adds enolpyruvyl to UDP-N-acetylglucosamine. The sequence is that of UDP-N-acetylglucosamine 1-carboxyvinyltransferase from Finegoldia magna (strain ATCC 29328 / DSM 20472 / WAL 2508) (Peptostreptococcus magnus).